The primary structure comprises 169 residues: MEKLAELGINIPSFIAQVVNFGLLLGLLYLFAYKPILAKLDERSARIKESMERTDQVKEQAQRAEEEFKKKIGEASQQGQLVIERAVKTGDEIRQKAIEEARAEAEAMLSRARTEIRQERDEVVDQLRKEFAELTILAAGKVIDQSLDKKAHQALIDSVLENSTNLRKN.

The helical transmembrane segment at 11–31 (IPSFIAQVVNFGLLLGLLYLF) threads the bilayer.

Belongs to the ATPase B chain family. As to quaternary structure, F-type ATPases have 2 components, F(1) - the catalytic core - and F(0) - the membrane proton channel. F(1) has five subunits: alpha(3), beta(3), gamma(1), delta(1), epsilon(1). F(0) has three main subunits: a(1), b(2) and c(10-14). The alpha and beta chains form an alternating ring which encloses part of the gamma chain. F(1) is attached to F(0) by a central stalk formed by the gamma and epsilon chains, while a peripheral stalk is formed by the delta and b chains.

The protein localises to the cell membrane. Functionally, f(1)F(0) ATP synthase produces ATP from ADP in the presence of a proton or sodium gradient. F-type ATPases consist of two structural domains, F(1) containing the extramembraneous catalytic core and F(0) containing the membrane proton channel, linked together by a central stalk and a peripheral stalk. During catalysis, ATP synthesis in the catalytic domain of F(1) is coupled via a rotary mechanism of the central stalk subunits to proton translocation. Component of the F(0) channel, it forms part of the peripheral stalk, linking F(1) to F(0). In Dehalococcoides mccartyi (strain ATCC BAA-2266 / KCTC 15142 / 195) (Dehalococcoides ethenogenes (strain 195)), this protein is ATP synthase subunit b.